Consider the following 1174-residue polypeptide: RecBCD enzyme subunit RecB (1174 aa).

The tract at residues 1 to 852 is DNA-binding and helicase activity, interacts with RecC; the sequence is MKIDSLKEKL…GGKTMNYEGL (852 aa). One can recognise a UvrD-like helicase ATP-binding domain in the interval 4–449; the sequence is DSLKEKLNIF…YYLDTNWRSS (446 aa). 25–32 is a binding site for ATP; sequence ASAGTGKT. A UvrD-like helicase C-terminal domain is found at 479 to 745; sequence PSSKNLKMNF…KIITIHKSKG (267 aa). The tract at residues 900-1174 is nuclease activity, interacts with RecD and RecA; sequence TWSITSFSQL…LIKKTMTLIS (275 aa). Mg(2+) contacts are provided by His957, Asp1068, and Asp1081. The active-site For nuclease activity is Asp1081.

This sequence belongs to the helicase family. UvrD subfamily. As to quaternary structure, heterotrimer of RecB, RecC and RecD. All subunits contribute to DNA-binding. Interacts with RecA. The cofactor is Mg(2+).

The catalysed reaction is Exonucleolytic cleavage (in the presence of ATP) in either 5'- to 3'- or 3'- to 5'-direction to yield 5'-phosphooligonucleotides.. It catalyses the reaction Couples ATP hydrolysis with the unwinding of duplex DNA by translocating in the 3'-5' direction.. It carries out the reaction ATP + H2O = ADP + phosphate + H(+). In terms of biological role, a helicase/nuclease that prepares dsDNA breaks (DSB) for recombinational DNA repair. Binds to DSBs and unwinds DNA via a highly rapid and processive ATP-dependent bidirectional helicase activity. Unwinds dsDNA until it encounters a Chi (crossover hotspot instigator) sequence from the 3' direction. Cuts ssDNA a few nucleotides 3' to the Chi site. The properties and activities of the enzyme are changed at Chi. The Chi-altered holoenzyme produces a long 3'-ssDNA overhang and facilitates RecA-binding to the ssDNA for homologous DNA recombination and repair. Holoenzyme degrades any linearized DNA that is unable to undergo homologous recombination. In the holoenzyme this subunit contributes ATPase, 3'-5' helicase, exonuclease activity and loads RecA onto ssDNA. The polypeptide is RecBCD enzyme subunit RecB (Buchnera aphidicola subsp. Acyrthosiphon pisum (strain APS) (Acyrthosiphon pisum symbiotic bacterium)).